Here is a 203-residue protein sequence, read N- to C-terminus: Ras-related protein Rab-13 (203 aa).

The GTP site is built by serine 17, glycine 18, glycine 20, lysine 21, threonine 22, cysteine 23, and threonine 40. Residue threonine 22 coordinates Mg(2+). A Switch 1 motif is present at residues 31–45 (DNFNSTYISTIGIDF). Residue threonine 40 coordinates Mg(2+). Glycyl lysine isopeptide (Lys-Gly) (interchain with G-Cter in ubiquitin) cross-links involve residues lysine 46 and lysine 58. Residue aspartate 63 coordinates Mg(2+). Residues 63-80 (DTAGQERFKTITTAYYRG) carry the Switch 2 motif. Positions 66, 121, 122, 124, 152, and 153 each coordinate GTP. Positions 173–203 (TGGRRSGNSSKPSSTDLKVSDKKNSNKCSLG) are disordered. Position 178 is a phosphoserine (serine 178). The segment covering 178–189 (SGNSSKPSSTDL) has biased composition (polar residues). Position 200 is a cysteine methyl ester (cysteine 200). The S-geranylgeranyl cysteine moiety is linked to residue cysteine 200. Residues 201-203 (SLG) constitute a propeptide, removed in mature form.

The protein belongs to the small GTPase superfamily. Rab family. As to quaternary structure, interacts (GTP-bound form) with MICALL2; competes with RAB8A and is involved in tight junctions assembly. Interacts (GTP-bound form) with MICALL1. Interacts (GTP-bound form) with MICAL1, MICAL3, MICALCL, EHBP1 and EHBP1L1; ternary complexes of RAB8A, RAB13 and either MICAL1 or EHBP1L1 are possible. Interacts with PRKACA; downstream effector of RAB13 involved in tight junction assembly. Interacts with GRB2; may recruit RAB13 to the leading edge of migrating endothelial cells where it can activate RHOA. Interacts (isoprenylated form) with PDE6D; dissociates RAB13 from membranes. Interacts with BICDL2/BICDR2. Interacts with LEPROT and LEPROTL1. Mg(2+) serves as cofactor. Post-translationally, ubiquitinated via 'Lys-11'-linked ubiquitination on Lys-46 and Lys-58; impairing the recruitment of guanosine diphosphate (GDP) dissociation inhibitor 1/GDI1. In terms of tissue distribution, highest levels found in lung, kidney, whole brain and spinal cord. Expressed in all tissues tested including Sertoli and germ cells (at protein level). Also detected in osteoclasts.

The protein localises to the cell membrane. It localises to the cytoplasmic vesicle membrane. It is found in the cell junction. Its subcellular location is the tight junction. The protein resides in the golgi apparatus. The protein localises to the trans-Golgi network membrane. It localises to the recycling endosome membrane. It is found in the cell projection. Its subcellular location is the lamellipodium. It carries out the reaction GTP + H2O = GDP + phosphate + H(+). Its activity is regulated as follows. Regulated by guanine nucleotide exchange factors (GEFs) including DENND1C, which promote the exchange of bound GDP for free GTP. Regulated by GTPase activating proteins (GAPs) which increase the GTP hydrolysis activity. Inhibited by GDP dissociation inhibitors (GDIs). Activated in response to insulin. Functionally, the small GTPases Rab are key regulators of intracellular membrane trafficking, from the formation of transport vesicles to their fusion with membranes. Rabs cycle between an inactive GDP-bound form and an active GTP-bound form that is able to recruit to membranes different sets of downstream effectors directly responsible for vesicle formation, movement, tethering and fusion. RAB13 is involved in endocytic recycling and regulates the transport to the plasma membrane of transmembrane proteins like the tight junction protein OCLN/occludin. Thereby, it regulates the assembly and the activity of tight junctions. Moreover, it may also regulate tight junction assembly by activating the PKA signaling pathway and by reorganizing the actin cytoskeleton through the activation of the downstream effectors PRKACA and MICALL2 respectively. Through its role in tight junction assembly, may play a role in the establishment of Sertoli cell barrier. Plays also a role in angiogenesis through regulation of endothelial cells chemotaxis. Also involved in neurite outgrowth. Has also been proposed to play a role in post-Golgi membrane trafficking from the TGN to the recycling endosome. Finally, it has been involved in insulin-induced transport to the plasma membrane of the glucose transporter GLUT4 and therefore may play a role in glucose homeostasis. This Rattus norvegicus (Rat) protein is Ras-related protein Rab-13.